The chain runs to 676 residues: Envelope glycoprotein (676 aa).

The first 32 residues, 1-32, serve as a signal peptide directing secretion; the sequence is MEGLSLLQLPRDKFRKSSFFVWVIILFQKAFS. Topologically, residues 33–650 are extracellular; that stretch reads MPLGVVTNST…DDNWWTGWRQ (618 aa). Asn-40 carries N-linked (GlcNAc...) asparagine; by host glycosylation. Intrachain disulfides connect Cys-53–Cys-609, Cys-108–Cys-135, Cys-121–Cys-147, Cys-511–Cys-556, and Cys-601–Cys-608. The interval 54–201 is receptor-binding; that stretch reads KDHLASTDQL…TFLQSPPIRE (148 aa). N-linked (GlcNAc...) asparagine; by host glycosylation is found at Asn-204, Asn-208, Asn-238, Asn-257, Asn-268, Asn-296, and Asn-314. The segment at 305 to 485 is mucin-like region; the sequence is ELSFETLSLN…STSNGLITST (181 aa). Positions 312-351 are disordered; that stretch reads SLNETEDDDATSSRTTKGRISDRATRKYSDLVPKDSPGMV. Residues 330 to 344 show a composition bias toward basic and acidic residues; it reads RISDRATRKYSDLVP. Asn-366 carries an N-linked (GlcNAc...) asparagine; by host glycan. The interval 406-458 is disordered; it reads SSSQILSSSPTMAPSPETQTSTTYTPKLPVMTTEEPTTPPRNSPGSTTEAPTL. Composition is skewed to polar residues over residues 415–430 and 448–458; these read PTMA…TTYT and SPGSTTEAPTL. Asn-463 carries N-linked (GlcNAc...) asparagine; by host glycosylation. The tract at residues 524–539 is fusion peptide; sequence HNAAGIAWIPYFGPGA. A coiled-coil region spans residues 554-595; it reads LVCGLRQLANETTQALQLFLRATTELRTYTILNRKAIDFLLR. The N-linked (GlcNAc...) asparagine; by host glycan is linked to Asn-563. The stretch at 615–634 forms a coiled coil; the sequence is WTKNITDKINQIIHDFIDNP. An N-linked (GlcNAc...) asparagine; by host glycan is attached at Asn-618. A helical membrane pass occupies residues 651–671; that stretch reads WIPAGIGITGIIIAIIALLCV. Residues Cys-670 and Cys-672 are each lipidated (S-palmitoyl cysteine; by host). Residues 672-676 are Cytoplasmic-facing; that stretch reads CKLLC.

Belongs to the filoviruses glycoprotein family. Homotrimer; each monomer consists of a GP1 and a GP2 subunit linked by disulfide bonds. The resulting peplomers (GP1,2) protrude from the virus surface as spikes. Interacts with host integrin alpha-V/ITGAV. Interacts with host CLEC10A. Binds also to host CD209 and CLEC4M/DC-SIGN(R). Interacts with host FOLR1. Interacts with BST2; this interaction inhibits the antiviral effect of BST2 and this allows viral release from infected cells. Interacts with host FCN1; this interaction enhances viral entry. Interacts with host TLR4; this interaction induces cell death in T-lymphocytes or proinflammatory cytokines and SOCS1 production in monocytes. As to quaternary structure, interacts with host entry receptor NPC1. In terms of assembly, GP1 and GP2delta are part of GP1,2delta soluble complexes released by ectodomain shedding. The signal peptide region modulates GP's high mannose glycosylation, thereby determining the efficiency of the interactions with DC-SIGN(R). Post-translationally, N-glycosylated. In terms of processing, O-glycosylated in the mucin-like region. Palmitoylation of GP2 is not required for its function. Post-translationally, specific enzymatic cleavages in vivo yield mature proteins. The precursor is processed into GP1 and GP2 by host cell furin in the trans Golgi, and maybe by other host proteases, to yield the mature GP1 and GP2 proteins. The cleavage site corresponds to the furin optimal cleavage sequence [KR]-X-[KR]-R. This cleavage does not seem to be required for function. After the internalization of the virus into cell endosomes, GP1 C-terminus is removed by the endosomal proteases cathepsin B, cathepsin L, or both, leaving a 19-kDa N-terminal fragment which is further digested by cathepsin B. Proteolytic processing of GP1,2 by host ADAM17 can remove the transmembrane anchor of GP2 and leads to shedding of complexes consisting in GP1 and truncated GP2 (GP1,2delta).

It localises to the virion membrane. The protein localises to the host cell membrane. The protein resides in the secreted. Trimeric GP1,2 complexes form the virion surface spikes and mediate the viral entry processes, with GP1 acting as the receptor-binding subunit and GP2 as the membrane fusion subunit. At later times of infection, down-regulates the expression of various host cell surface molecules that are essential for immune surveillance and cell adhesion. Down-modulates several integrins including ITGA1, ITGA2, ITGA3, ITGA4, ITGA5, ITGA6, ITGAV and ITGB1. This decrease in cell adhesion molecules may lead to cell detachment, contributing to the disruption of blood vessel integrity and hemorrhages developed during infection (cytotoxicity). Interacts with host TLR4 and thereby stimulates the differentiation and activation of monocytes leading to bystander death of T-lymphocytes. Down-regulates as well the function of host natural killer cells. Counteracts the antiviral effect of host BST2/tetherin that restricts release of progeny virions from infected cells. However, cooperates with VP40 and host BST2 to activate canonical NF-kappa-B pathway in a manner dependent on neddylation. In terms of biological role, functions as a decoy for anti-GP1,2 antibodies thereby contributing to viral immune evasion. Interacts and activates host macrophages and dendritic cells inducing up-regulation of cytokine transcription. This effect is mediated throught activation of host TLR4. Its function is as follows. Responsible for binding to the receptor(s) on target cells. Interacts with CD209/DC-SIGN and CLEC4M/DC-SIGNR which act as cofactors for virus entry into dendritic cells (DCs) and endothelial cells. Binding to the macrophage specific lectin CLEC10A also seems to enhance virus infectivity. Interaction with FOLR1/folate receptor alpha may be a cofactor for virus entry in some cell types, although results are contradictory. Members of the Tyro3 receptor tyrosine kinase family also seem to be cell entry factors in filovirus infection. Once attached, the virions are internalized through clathrin-dependent endocytosis and/or macropinocytosis. After internalization of the virus into the endosomes of the host cell, proteolysis of GP1 by two cysteine proteases, CTSB/cathepsin B and CTSL/cathepsin L removes the glycan cap and allows GP1 binding to the host entry receptor NPC1. NPC1-binding, Ca(2+) and acidic pH induce a conformational change of GP2, which unmasks its fusion peptide and permit membranes fusion. Functionally, acts as a class I viral fusion protein. Under the current model, the protein has at least 3 conformational states: pre-fusion native state, pre-hairpin intermediate state, and post-fusion hairpin state. During viral and target cell membrane fusion, the coiled coil regions (heptad repeats) assume a trimer-of-hairpins structure, positioning the fusion peptide in close proximity to the C-terminal region of the ectodomain. The formation of this structure appears to drive apposition and subsequent fusion of viral and target cell membranes. Responsible for penetration of the virus into the cell cytoplasm by mediating the fusion of the membrane of the endocytosed virus particle with the endosomal membrane. Low pH in endosomes induces an irreversible conformational change in GP2, releasing the fusion hydrophobic peptide. The sequence is that of Envelope glycoprotein (GP) from Sudan ebolavirus (strain Maleo-79) (SEBOV).